Reading from the N-terminus, the 437-residue chain is Protein translocase subunit SecY (437 aa).

A run of 10 helical transmembrane segments spans residues Leu19–Val39, Leu68–Leu88, Val121–Phe141, Ile156–Leu176, Gly188–Ile208, Trp218–Val238, Gly274–Phe294, Tyr317–Phe337, Ser378–Ala398, and Gln400–Val420.

This sequence belongs to the SecY/SEC61-alpha family. Component of the Sec protein translocase complex. Heterotrimer consisting of SecY, SecE and SecG subunits. The heterotrimers can form oligomers, although 1 heterotrimer is thought to be able to translocate proteins. Interacts with the ribosome. Interacts with SecDF, and other proteins may be involved. Interacts with SecA.

The protein localises to the cell membrane. The central subunit of the protein translocation channel SecYEG. Consists of two halves formed by TMs 1-5 and 6-10. These two domains form a lateral gate at the front which open onto the bilayer between TMs 2 and 7, and are clamped together by SecE at the back. The channel is closed by both a pore ring composed of hydrophobic SecY resides and a short helix (helix 2A) on the extracellular side of the membrane which forms a plug. The plug probably moves laterally to allow the channel to open. The ring and the pore may move independently. This is Protein translocase subunit SecY from Streptomyces griseus.